Reading from the N-terminus, the 134-residue chain is Small ribosomal subunit protein uS12 (134 aa).

Asp-89 carries the post-translational modification 3-methylthioaspartic acid. Residues 103–134 are disordered; sequence DTAGVKDRKQGRSKYGAKRPKPGEAAATGKKK. Basic residues predominate over residues 113–122; that stretch reads GRSKYGAKRP.

Belongs to the universal ribosomal protein uS12 family. In terms of assembly, part of the 30S ribosomal subunit. Contacts proteins S8 and S17. May interact with IF1 in the 30S initiation complex.

Functionally, with S4 and S5 plays an important role in translational accuracy. In terms of biological role, interacts with and stabilizes bases of the 16S rRNA that are involved in tRNA selection in the A site and with the mRNA backbone. Located at the interface of the 30S and 50S subunits, it traverses the body of the 30S subunit contacting proteins on the other side and probably holding the rRNA structure together. The combined cluster of proteins S8, S12 and S17 appears to hold together the shoulder and platform of the 30S subunit. The polypeptide is Small ribosomal subunit protein uS12 (Thermosynechococcus vestitus (strain NIES-2133 / IAM M-273 / BP-1)).